The following is a 387-amino-acid chain: Probable serine protease FE772_23060 (387 aa).

It belongs to the peptidase S1 family.

Its function is as follows. Possibly a dedicated protease for substrate gasdermin bGSDM; cleaves the bGSDM precursor, releasing the pore-forming moiety, which integrates into the membrane and triggers cell death. Involved in defense against bacteriophages. When this probable 4 gene operon (bGSDM-FE772_23060-FE772_23065-FE772_23070) is inserted into E.coli it provides nearly 100-fold protection against phages T5 and T6 and about 8-fold against phage T4. The operon without bGSDM no longer protects against phage. The sequence is that of Probable serine protease FE772_23060 from Lysobacter enzymogenes.